The primary structure comprises 355 residues: Phosphoribosylformylglycinamidine cyclo-ligase (355 aa).

The protein belongs to the AIR synthase family.

The protein resides in the cytoplasm. The enzyme catalyses 2-formamido-N(1)-(5-O-phospho-beta-D-ribosyl)acetamidine + ATP = 5-amino-1-(5-phospho-beta-D-ribosyl)imidazole + ADP + phosphate + H(+). It functions in the pathway purine metabolism; IMP biosynthesis via de novo pathway; 5-amino-1-(5-phospho-D-ribosyl)imidazole from N(2)-formyl-N(1)-(5-phospho-D-ribosyl)glycinamide: step 2/2. The protein is Phosphoribosylformylglycinamidine cyclo-ligase of Beijerinckia indica subsp. indica (strain ATCC 9039 / DSM 1715 / NCIMB 8712).